A 943-amino-acid polypeptide reads, in one-letter code: Coiled-coil and C2 domain-containing protein 1A (943 aa).

T91 is modified (phosphothreonine). 2 disordered regions span residues 186 to 250 and 300 to 337; these read NEAD…CSPL and DLSR…VPQP. Composition is skewed to low complexity over residues 195-206 and 229-238; these read ASGKGAAAGHSH and APSTTTPTSA. S248 is modified (phosphoserine). Over residues 304-319 the composition is skewed to pro residues; sequence LPPPPDQLSPEPPLPA. Residues 339–385 adopt a coiled-coil conformation; sequence RNLLEALEQRMERYHVAAAQAKAKGDQRKARMHERIVKQYQDAIRAH. Positions 430–483 are disordered; sequence NHDEGSDDEEEETPKKQNTPAASTTQLKSSPSKAPPSGPAPAGKAAPKGTSNRA. Residue S435 is modified to Phosphoserine. A compositionally biased stretch (polar residues) spans 445 to 456; the sequence is KQNTPAASTTQL. Over residues 469 to 478 the composition is skewed to low complexity; the sequence is APAGKAAPKG. Positions 477–510 form a coiled coil; it reads KGTSNRAQQQLAFLEGRKKQLLQAALRAKQKNDV. The 135-residue stretch at 630–764 folds into the C2 domain; the sequence is RFEQRTFSVI…ETACEVHEIL (135 aa).

Belongs to the CC2D1 family. As to expression, highly expressed in brain, expression is enriched in the gray matter and strongest in the olfactory bulb.

The protein resides in the cytoplasm. It localises to the nucleus. Its subcellular location is the cytoskeleton. The protein localises to the microtubule organizing center. It is found in the centrosome. Transcription factor that binds specifically to the DRE (dual repressor element) and represses HTR1A gene transcription in neuronal cells. The combination of calcium and ATP specifically inactivates the binding with FRE. May play a role in the altered regulation of HTR1A associated with anxiety and major depression. Mediates HDAC-independent repression of HTR1A promoter in neuronal cell. Performs essential function in controlling functional maturation of synapses. This is Coiled-coil and C2 domain-containing protein 1A (Cc2d1a) from Mus musculus (Mouse).